We begin with the raw amino-acid sequence, 554 residues long: Valerianol synthase TPS1G (554 aa).

Mg(2+) contacts are provided by D307 and D311. The short motif at 326-330 (VQRWD) is the DDXXD motif element. 3 residues coordinate Mg(2+): D452, S456, and E460.

It belongs to the terpene synthase family. Mg(2+) is required as a cofactor.

The catalysed reaction is (2E,6E)-farnesyl diphosphate + H2O = valerianol + diphosphate. Its pathway is secondary metabolite biosynthesis; terpenoid biosynthesis. Terpene synthase that catalyzes the biosynthesis of the terpene valerianol, which is a volatile compound of floral scent. This chain is Valerianol synthase TPS1G, found in Camellia hiemalis (Camellia).